The sequence spans 451 residues: Eukaryotic translation initiation factor 3 subunit E (451 aa).

The region spanning 245 to 425 (PFFNHEPARD…GTVVMNHPPS (181 aa)) is the PCI domain.

Belongs to the eIF-3 subunit E family. As to quaternary structure, component of the eukaryotic translation initiation factor 3 (eIF-3) complex.

The protein resides in the cytoplasm. Its function is as follows. Component of the eukaryotic translation initiation factor 3 (eIF-3) complex, which is involved in protein synthesis of a specialized repertoire of mRNAs and, together with other initiation factors, stimulates binding of mRNA and methionyl-tRNAi to the 40S ribosome. The eIF-3 complex specifically targets and initiates translation of a subset of mRNAs involved in cell proliferation. The protein is Eukaryotic translation initiation factor 3 subunit E (int6) of Sclerotinia sclerotiorum (strain ATCC 18683 / 1980 / Ss-1) (White mold).